A 274-amino-acid polypeptide reads, in one-letter code: 2,3,4,5-tetrahydropyridine-2,6-dicarboxylate N-succinyltransferase (274 aa).

The protein belongs to the transferase hexapeptide repeat family.

It localises to the cytoplasm. It carries out the reaction (S)-2,3,4,5-tetrahydrodipicolinate + succinyl-CoA + H2O = (S)-2-succinylamino-6-oxoheptanedioate + CoA. The protein operates within amino-acid biosynthesis; L-lysine biosynthesis via DAP pathway; LL-2,6-diaminopimelate from (S)-tetrahydrodipicolinate (succinylase route): step 1/3. This is 2,3,4,5-tetrahydropyridine-2,6-dicarboxylate N-succinyltransferase from Yersinia pseudotuberculosis serotype IB (strain PB1/+).